Consider the following 2115-residue polypeptide: Nuclear mitotic apparatus protein 1 (2115 aa).

The head (Globular) stretch occupies residues 1–212 (MTLHATRGAA…SPMGDILQTP (212 aa)). A Phosphoserine modification is found at serine 162. Threonine 163 carries the phosphothreonine modification. Phosphoserine occurs at positions 169 and 203. Threonine 211 carries the post-translational modification Phosphothreonine. Residues 213 to 1699 (QFQMRRLKKQ…ADQQLRDLGK (1487 aa)) are a coiled coil. Serine 271 bears the Phosphoserine mark. Lysine 379 carries the N6-acetyllysine modification. Residues serine 388 and serine 395 each carry the phosphoserine modification. Residues 549–560 (LRHQVEQLSSSL) are compositionally biased toward low complexity. Disordered regions lie at residues 549-593 (LRHQ…EERE) and 746-766 (LVEQHKRERKELEEERAGRKG). Residues 561–581 (KQKEQQLKEVAEKQEATRQDH) are compositionally biased toward basic and acidic residues. Serine 820 carries the phosphoserine modification. N6-acetyllysine is present on lysine 891. 2 stretches are compositionally biased toward basic and acidic residues: residues 926 to 950 (AGEQQETASRELVKEPARAGDRQPE) and 996 to 1013 (QEERGQQEREVARLTQER). Disordered stretches follow at residues 926-958 (AGEQQETASRELVKEPARAGDRQPEWLEEQQGR) and 988-1013 (LMESQGQQQEERGQQEREVARLTQER). The residue at position 1047 (threonine 1047) is a Phosphothreonine; by PLK1. The segment covering 1090–1102 (LKEQLAKKEKEHA) has biased composition (basic and acidic residues). 2 disordered regions span residues 1090–1225 (LKEQ…RKNS) and 1275–1296 (ETASNSARAAERSSALREEVQS). 2 stretches are compositionally biased toward low complexity: residues 1103 to 1112 (SGSGAQSEAA) and 1133 to 1142 (EQQCQKQQEQ). Over residues 1145-1163 (SLERSLEAERASRAERDSA) the composition is skewed to basic and acidic residues. Serine 1187 carries the phosphoserine modification. Residues 1198–1224 (KVQDHSKAEDEWKAQVARGRQEAERKN) are compositionally biased toward basic and acidic residues. Residue serine 1225 is modified to Phosphoserine. Residues 1283–1296 (AAERSSALREEVQS) show a composition bias toward basic and acidic residues. At lysine 1511 the chain carries N6-acetyllysine. A Phosphoserine modification is found at serine 1601. Residue lysine 1699 forms a Glycyl lysine isopeptide (Lys-Gly) (interchain with G-Cter in SUMO2) linkage. A membrane-binding domain 1 region spans residues 1699–1876 (KFQVATDALK…NSALLSLPGY (178 aa)). Residues 1700 to 2115 (FQVATDALKS…TPRAKGKAKH (416 aa)) form a tail (Globular) region. A phosphoserine mark is found at serine 1721, serine 1724, and serine 1728. The segment at 1734-1761 (PLSITSKLPRTQPDGTSVPGEPASPISQ) is disordered. Residues 1735-1748 (LSITSKLPRTQPDG) are compositionally biased toward polar residues. The Tankyrase-binding domain signature appears at 1742–1748 (PRTQPDG). Serine 1757 and serine 1760 each carry phosphoserine. Residue lysine 1766 forms a Glycyl lysine isopeptide (Lys-Gly) (interchain with G-Cter in SUMO1); alternate linkage. A Glycyl lysine isopeptide (Lys-Gly) (interchain with G-Cter in SUMO2); alternate cross-link involves residue lysine 1766. Phosphoserine; by PLK1 occurs at positions 1769 and 1772. A Phosphotyrosine modification is found at tyrosine 1774. Phosphothreonine is present on threonine 1776. Serine 1788 bears the Phosphoserine mark. The segment at 1788 to 1810 (SSLDSLGDVFLDSGRKTRSARRR) is 4.1-binding domain. A Phosphoserine; by PLK1 modification is found at serine 1789. Phosphoserine occurs at positions 1792 and 1800. Residue threonine 1804 is modified to Phosphothreonine. Residue lysine 1822 forms a Glycyl lysine isopeptide (Lys-Gly) (interchain with G-Cter in SUMO2) linkage. 2 disordered regions span residues 1826-1901 (EEPD…GRNS) and 1955-2115 (EMKT…KAKH). 2 positions are modified to phosphoserine: serine 1830 and serine 1833. The span at 1830–1857 (SANSSFYSTRSAPASQASLRATSSTQSL) shows a compositional bias: polar residues. Phosphoserine; by PLK1 is present on serine 1834. Tyrosine 1836 bears the Phosphotyrosine mark. The residue at position 1840 (serine 1840) is a Phosphoserine. Serine 1844 bears the Phosphoserine; alternate mark. An O-linked (GlcNAc) serine; alternate glycan is attached at serine 1844. Serine 1862 and serine 1887 each carry phosphoserine. The segment covering 1879 to 1891 (TTRSSARRSQAGV) has biased composition (polar residues). Residues 1882–1985 (SSARRSQAGV…AEGTGITTRQ (104 aa)) form a tubulin-binding domain region. The GPSM2-binding domain stretch occupies residues 1892–1926 (SSGAPPGRNSFYMGTCQDEPEQLDDWNRIAELQQR). A compositionally biased stretch (basic and acidic residues) spans 1955 to 1966 (EMKTGDPQETLR). Position 1969 is a phosphoserine (serine 1969). The membrane-binding domain 2 stretch occupies residues 1981–2060 (ITTRQQRKRV…SILNTPKKLG (80 aa)). The Nuclear localization signal signature appears at 1984 to 1989 (RQQRKR). Residue serine 1991 is modified to Phosphoserine. Threonine 2000 is modified (phosphothreonine). The residue at position 2003 (serine 2003) is a Phosphoserine. Threonine 2015 carries the phosphothreonine; by CDK1 modification. Over residues 2015-2032 (TPRDRHEGRKQSTTEAQK) the composition is skewed to basic and acidic residues. At serine 2047 the chain carries Phosphoserine. Threonine 2055 carries the phosphothreonine; by CDK1 modification. Phosphoserine is present on residues serine 2062 and serine 2077. Serine 2087 carries the phosphoserine; by CDK1 modification. The segment covering 2089–2108 (RIATTTASAATAAAIGATPR) has biased composition (low complexity). Position 2106 is a phosphothreonine; by CDK1 (threonine 2106).

As to quaternary structure, homodimer. Also forms multiarm oligomers by association of C-terminal tail domains, oligomers may further assemble to form a hexagonal nuclear lattice-like network. Associates with the dynein-dynactin complex; this association promotes the transport and accumulation of NUMA1 at the mitotic spindle poles that is inhibited by the BRISC complex in a PLK1-dependent manner. Part of a spindle orientation complex at least composed of GNAI1, GPSM2 and NUMA1. Interacts (via C-terminus) with microtubules (MTs); this interaction is direct and promotes both MT bundle formation and stability in a dynein-dynactin complex- and CDK1-independent manner. Interacts with EPB41 and EPB41L2; these interactions are negatively regulated by CDK1 during metaphase and are important for anaphase-specific localization of NUMA1 in symmetrically dividing cells. Interacts (via C-terminus) with GPSM2 (via TPR repeats); this interaction is direct, prevented by competitive binding of INSC, is inhibited in a PLK1-dependent manner, blocks the association of NUMA1 with MTs and inhibits NUMA1-induced MT bundle formation, prevents the association of NUMA1 with SPAG5, induces mitotic spindle pole localization of GPSM2, both metaphase cell cortex localization of NUMA1 and mitotic spindle organization. Does not interact with GPSM2 during anaphase. Interacts (via C-terminus) with the nuclear importin alpha/importin beta receptor; this interaction is inhibited by RanGTP. Interacts (via C-terminus) with KPNB1; this interaction is inhibited by RanGTP and the BRISC complex. Interacts with ABRAXAS2 and the BRISC complex; these interactions regulate mitotic spindle assembly. Interacts (via N-terminal end of the coiled-coil domain) with RAE1; this interaction promotes mitotic spindle formation. Interacts (via C-terminus) with SPAG5 (via C-terminus); this interaction promotes the recruitment of SPAG5 to the MTs at spindle poles in a dynein-dynactin-dependent manner and regulates mitotic spindle organization and proper chromosome alignment during mitosis. Interacts with TNKS; this interaction occurs at the onset of mitosis. Interacts with TNKS2. Interacts with tubulin. Interacts with KHDC3L (via C-terminus). In terms of processing, phosphorylation and dephosphorylation on Thr-2055 regulates the extent of cortical NUMA1 and the dynein-dynactin complex localization during mitotic metaphase and anaphase. In metaphase, phosphorylation on Thr-2055 occurs in a kinase CDK1-dependent manner; this phosphorylation maintains low levels of cortical dynein-dynactin complex at metaphase, and hence proper spindle positioning. In anaphase, dephosphorylated on Thr-2055 by phosphatase PPP2CA; this dephosphorylation stimulates its membrane association and with the dynein-dynactin complex its enrichment at the cell cortex, and hence robust spindle elongation. Probably also phosphorylated on Thr-2015 and Ser-2087 by CDK1; these phosphorylations may regulate its cell cortex recruitment during metaphase and anaphase. Phosphorylated on Thr-1047, Ser-1769, Ser-1772, Ser-1789 and Ser-1834 by PLK1; these phosphorylations induce cortical dynein-dynactin complex dissociation from the NUMA1-GPSM2 complex and negatively regulates cortical dynein-dynactin complex localization. ADP-ribosylated by TNKS at the onset of mitosis; ADP-ribosylation is not required for its localization to spindle poles. Post-translationally, O-glycosylated during cytokinesis at sites identical or close to phosphorylation sites, this interferes with the phosphorylation status. In terms of processing, ubiquitinated with 'Lys-63'-linked polyubiquitin chains. Deubiquitination by the BRISC complex is important for the incorporation of NUMA1 into mitotic spindle poles and normal spindle pole function, probably by modulating interactions between NUMA1, dynein-dynactin complex and importin-beta.

It localises to the nucleus. It is found in the nucleoplasm. The protein resides in the nucleus matrix. The protein localises to the chromosome. Its subcellular location is the cytoplasm. It localises to the cytoskeleton. It is found in the microtubule organizing center. The protein resides in the centrosome. The protein localises to the spindle pole. Its subcellular location is the cell cortex. It localises to the cell membrane. It is found in the lateral cell membrane. The protein resides in the cytosol. Functionally, microtubule (MT)-binding protein that plays a role in the formation and maintenance of the spindle poles and the alignement and the segregation of chromosomes during mitotic cell division. Functions to tether the minus ends of MTs at the spindle poles, which is critical for the establishment and maintenance of the spindle poles. Plays a role in the establishment of the mitotic spindle orientation during metaphase and elongation during anaphase in a dynein-dynactin-dependent manner. In metaphase, part of a ternary complex composed of GPSM2 and G(i) alpha proteins, that regulates the recruitment and anchorage of the dynein-dynactin complex in the mitotic cell cortex regions situated above the two spindle poles, and hence regulates the correct oritentation of the mitotic spindle. During anaphase, mediates the recruitment and accumulation of the dynein-dynactin complex at the cell membrane of the polar cortical region through direct association with phosphatidylinositol 4,5-bisphosphate (PI(4,5)P2), and hence participates in the regulation of the spindle elongation and chromosome segregation. Also binds to other polyanionic phosphoinositides, such as phosphatidylinositol 3-phosphate (PIP), lysophosphatidic acid (LPA) and phosphatidylinositol triphosphate (PIP3), in vitro. Also required for proper orientation of the mitotic spindle during asymmetric cell divisions. Plays a role in mitotic MT aster assembly. Involved in anastral spindle assembly. Positively regulates TNKS protein localization to spindle poles in mitosis. Highly abundant component of the nuclear matrix where it may serve a non-mitotic structural role, occupies the majority of the nuclear volume. Required for epidermal differentiation and hair follicle morphogenesis. This Homo sapiens (Human) protein is Nuclear mitotic apparatus protein 1.